We begin with the raw amino-acid sequence, 319 residues long: Guanosine ABC transporter permease protein NupQ (319 aa).

9 consecutive transmembrane segments (helical) span residues 6–26 (ILSI…LTAL), 39–59 (IGLE…NLFF), 65–85 (AAAP…FSLI), 99–119 (VSGV…VKLI), 159–179 (ILAI…PFGL), 204–224 (IGVM…ASTI), 235–255 (GQGF…IGAL), 257–277 (AALF…LPLF), and 282–302 (NVYM…GFIG).

The protein belongs to the binding-protein-dependent transport system permease family. As to quaternary structure, the complex is composed of two ATP-binding proteins (NupO), two transmembrane proteins (NupP and NupQ) and a solute-binding protein (NupN).

The protein localises to the cell membrane. Part of an ABC transporter complex involved in the uptake of guanosine. Responsible for the translocation of the substrate across the membrane. May be a nucleoside transporter of broad specificity but with various affinities for different substrates. This chain is Guanosine ABC transporter permease protein NupQ, found in Bacillus subtilis (strain 168).